A 171-amino-acid polypeptide reads, in one-letter code: MTSLLITGYKSFELGVFKDKDPKVNIIKKAIKRDLKRFLDEGVDWMIFTGNLGFEFWALEVAKELQKDYPLRLATLFPFETHGQNWSEANQEKLAAFKQVDFVKYSFPAYQSPAQFKQFNQFLIDNTDQAYLFYEPENETNLKYFYNMIIAASDYPLFRLTFDDLNEVMSE.

It belongs to the UPF0398 family.

The protein is UPF0398 protein STER_0279 of Streptococcus thermophilus (strain ATCC BAA-491 / LMD-9).